Reading from the N-terminus, the 233-residue chain is MDLNLDAPHSMGTTIIGVTYNGGVVLGADSRTSTGMYVANRASDKITQLTDNVYVCRSGSAADSQVVSDYVRYFLHQHTIQHGQPATVKVSANLIRMLAYNNKNMLQTGLIVGGWDKYEGGKIYGIPLGGTVVEQPFAIGGSGSSYLYGFFDQAWKDNMTKEEAEQLVVKAVSLAIARDGASGGVVRTVIINSEGVTRNFYPGDKLQLWHEELEPQNSLLDILNAAGPEPMAM.

Residues 1–12 (MDLNLDAPHSMG) constitute a propeptide, removed in mature form. The active-site Nucleophile is Thr13.

The protein belongs to the peptidase T1B family. Component of the 20S core complex of the 26S proteasome. The 26S proteasome is composed of a core protease (CP), known as the 20S proteasome, capped at one or both ends by the 19S regulatory particle (RP/PA700). The 20S proteasome core is composed of 28 subunits that are arranged in four stacked rings, resulting in a barrel-shaped structure. The two end rings are each formed by seven alpha subunits, and the two central rings are each formed by seven beta subunits. The catalytic chamber with the active sites is on the inside of the barrel.

It localises to the cytoplasm. The protein resides in the nucleus. The catalysed reaction is Cleavage of peptide bonds with very broad specificity.. Its function is as follows. The proteasome is a multicatalytic proteinase complex which is characterized by its ability to cleave peptides with Arg, Phe, Tyr, Leu, and Glu adjacent to the leaving group at neutral or slightly basic pH. The proteasome has an ATP-dependent proteolytic activity. This chain is Proteasome subunit beta type-6 (PBA1), found in Arabidopsis thaliana (Mouse-ear cress).